The following is a 74-amino-acid chain: MDIVSLKFIGIGFMAIGMYGAALGVSNIFSSLLSAIARNPSAAENLQRMALIGAGLAEAMGLFAFVIAMLLIFS.

A run of 2 helical transmembrane segments spans residues phenylalanine 8–isoleucine 28 and isoleucine 52–isoleucine 72.

The protein belongs to the ATPase C chain family. In terms of assembly, F-type ATPases have 2 components, F(1) - the catalytic core - and F(0) - the membrane proton channel. F(1) has five subunits: alpha(3), beta(3), gamma(1), delta(1), epsilon(1). F(0) has three main subunits: a(1), b(2) and c(10-14). The alpha and beta chains form an alternating ring which encloses part of the gamma chain. F(1) is attached to F(0) by a central stalk formed by the gamma and epsilon chains, while a peripheral stalk is formed by the delta and b chains.

The protein resides in the cell inner membrane. In terms of biological role, f(1)F(0) ATP synthase produces ATP from ADP in the presence of a proton or sodium gradient. F-type ATPases consist of two structural domains, F(1) containing the extramembraneous catalytic core and F(0) containing the membrane proton channel, linked together by a central stalk and a peripheral stalk. During catalysis, ATP synthesis in the catalytic domain of F(1) is coupled via a rotary mechanism of the central stalk subunits to proton translocation. Key component of the F(0) channel; it plays a direct role in translocation across the membrane. A homomeric c-ring of between 10-14 subunits forms the central stalk rotor element with the F(1) delta and epsilon subunits. This chain is ATP synthase subunit c, found in Rickettsia typhi (strain ATCC VR-144 / Wilmington).